Consider the following 445-residue polypeptide: MGSALENYVNQVRTLSASGSYRELAEELPESLSLLARNWSILDNVLETLDMQQHSLGVLYVLLAKLHSASTANPEPVQLIQLMRDFVQRNNNEQLRYAVCAFYETCHLFTEFVVQKNLSILGIRIISRAIDQIRQLETQLTPIHADLCLLSLKAKNFSVVLPYLDADITDISTVAAECKTQQQQQSQHADANNDAKYFLLYFYYGGMIYTAVKNYERALYFFEVCITTPAMAMSHIMLEAYKKFLMVSLIVEGKIAYIPKNTQVIGRFMKPMANHYHDLVNVYANSSSEELRIIILKYSEAFTRDNNMGLAKQVATSLYKRNIQRLTKTFLTLSLSDVASRVQLASAVEAERYILNMIKSGEIYASINQKDGMVLFKDDPEKYNSPEMFLNVQNNITHVLDQVRQINKMEEEIILNPMYVKKALGSQDDDLTSQHPKTFSGDPTD.

Residues arginine 217–glutamate 381 form the PCI domain. Residues serine 426–aspartate 445 form a disordered region. Polar residues predominate over residues serine 433–aspartate 445.

The protein belongs to the CSN3 family. Component of the CSN complex, probably composed of CSN1b, alien/CSN2, CSN3, CSN4, CSN5, CSN6, CSN7 and CSN8.

The protein resides in the cytoplasm. It is found in the nucleus. Its function is as follows. Component of the COP9 signalosome complex (CSN), a complex involved in various cellular and developmental processes. The CSN complex is an essential regulator of the ubiquitin (Ubl) conjugation pathway by mediating the deneddylation of the cullin subunits of the SCF-type E3 ligase complexes, leading to decrease the Ubl ligase activity of SCF. The CSN complex plays an essential role in oogenesis and embryogenesis and is required for proper photoreceptor R cell differentiation and promote lamina glial cell migration or axon targeting. It also promotes Ubl-dependent degradation of cyclin E (CycE) during early oogenesis. This Drosophila melanogaster (Fruit fly) protein is COP9 signalosome complex subunit 3 (CSN3).